A 170-amino-acid chain; its full sequence is Ribosome maturation factor RimM (170 aa).

Positions 97-170 constitute a PRC barrel domain; it reads HPDEYYWVDL…RIVVDWDPEF (74 aa).

Belongs to the RimM family. As to quaternary structure, binds ribosomal protein uS19.

It localises to the cytoplasm. An accessory protein needed during the final step in the assembly of 30S ribosomal subunit, possibly for assembly of the head region. Essential for efficient processing of 16S rRNA. May be needed both before and after RbfA during the maturation of 16S rRNA. It has affinity for free ribosomal 30S subunits but not for 70S ribosomes. The sequence is that of Ribosome maturation factor RimM from Xylella fastidiosa (strain M12).